The sequence spans 320 residues: Eukaryotic translation initiation factor 3 subunit G (320 aa).

The segment at 1-59 is disordered; that stretch reads MPTGDFDSKPSWADQVEEEGEDDKCVTSELLKGIPLATGDTSPEPELLPGAPLPPPKEV. A phosphoserine mark is found at S8 and S11. Residues T38 and T41 each carry the phosphothreonine modification. A phosphoserine mark is found at S42, S189, S223, and S264. Residues 209-234 are disordered; that stretch reads KTGKYVPPSLRDGASRRGESMQPNRR. Positions 221–234 are enriched in basic and acidic residues; it reads GASRRGESMQPNRR. An RRM domain is found at 239-317; it reads ATIRVTNLSE…LILNVEWAKP (79 aa).

Component of the eukaryotic translation initiation factor 3 (eIF-3) complex, which is composed of 13 subunits: EIF3A, EIF3B, EIF3C, EIF3D, EIF3E, EIF3F, EIF3G, EIF3H, EIF3I, EIF3J, EIF3K, EIF3L and EIF3M. The eIF-3 complex appears to include 3 stable modules: module A is composed of EIF3A, EIF3B, EIF3G and EIF3I; module B is composed of EIF3F, EIF3H, and EIF3M; and module C is composed of EIF3C, EIF3D, EIF3E, EIF3K and EIF3L. EIF3C of module C binds EIF3B of module A and EIF3H of module B, thereby linking the three modules. EIF3J is a labile subunit that binds to the eIF-3 complex via EIF3B. The eIF-3 complex interacts with RPS6KB1 under conditions of nutrient depletion. Mitogenic stimulation leads to binding and activation of a complex composed of MTOR and RPTOR, leading to phosphorylation and release of RPS6KB1 and binding of EIF4B to eIF-3. Interacts (via C-terminus) with AIFM1 (via N-terminus). Interacts with DHX33; the interaction is independent of RNA. Phosphorylated. Phosphorylation is enhanced upon serum stimulation.

The protein localises to the cytoplasm. Its subcellular location is the nucleus. The protein resides in the perinuclear region. Functionally, RNA-binding component of the eukaryotic translation initiation factor 3 (eIF-3) complex, which is required for several steps in the initiation of protein synthesis. The eIF-3 complex associates with the 40S ribosome and facilitates the recruitment of eIF-1, eIF-1A, eIF-2:GTP:methionyl-tRNAi and eIF-5 to form the 43S pre-initiation complex (43S PIC). The eIF-3 complex stimulates mRNA recruitment to the 43S PIC and scanning of the mRNA for AUG recognition. The eIF-3 complex is also required for disassembly and recycling of post-termination ribosomal complexes and subsequently prevents premature joining of the 40S and 60S ribosomal subunits prior to initiation. The eIF-3 complex specifically targets and initiates translation of a subset of mRNAs involved in cell proliferation, including cell cycling, differentiation and apoptosis, and uses different modes of RNA stem-loop binding to exert either translational activation or repression. This subunit can bind 18S rRNA. (Microbial infection) In case of FCV infection, plays a role in the ribosomal termination-reinitiation event leading to the translation of VP2. In Homo sapiens (Human), this protein is Eukaryotic translation initiation factor 3 subunit G.